The following is a 495-amino-acid chain: Neuronal acetylcholine receptor subunit alpha-3 (495 aa).

Residues 1 to 21 (MARRSRLRRLLLLLLLPVAST) form the signal peptide. Residues 22–240 (SDAEHRLFER…PLFYTINLII (219 aa)) lie on the Extracellular side of the membrane. N-linked (GlcNAc...) asparagine glycans are attached at residues Asn45 and Asn162. Disulfide bonds link Cys149/Cys163 and Cys213/Cys214. Residues 241-256 (PCLLISFLTVLVFYLP) traverse the membrane as a helical segment. The Cytoplasmic portion of the chain corresponds to 257-258 (SD). A helical membrane pass occupies residues 259–275 (CGEKVTLCISVLLSLTV). Residue Glu261 participates in Na(+) binding. Topologically, residues 276 to 297 (FLLVITETIPSTSLVIPLIGEY) are extracellular. The chain crosses the membrane as a helical span at residues 298–316 (LLFTMIFVTLSIVITVFVL). Over 317-464 (NVHYRTPTTH…QDDWKYVAMV (148 aa)) the chain is Cytoplasmic. 2 positions are modified to phosphoserine: Ser403 and Ser406. Residues 465 to 483 (IDRIFLWVFILVCILGTAG) traverse the membrane as a helical segment. Topologically, residues 484–495 (LFLQPLMTRDDA) are extracellular.

Belongs to the ligand-gated ion channel (TC 1.A.9) family. Acetylcholine receptor (TC 1.A.9.1) subfamily. Alpha-3/CHRNA3 sub-subfamily. In terms of assembly, neuronal AChR is composed of two different types of subunits: alpha and beta. CHRNA3/Alpha-3 subunit can be combined to CHRNB2/beta-2 or CHRNB4/beta-4 to give rise to functional receptors. Part of a complex composed of STUB1/CHIP, VCP/p97, CHRNA3, and UBXN2A that modulates the ubiquitination and endoplasmic reticulum-associated degradation (ERAD) of CHRNA3. Within the complex UBXN2A acts as a scaffold protein required for the interaction of CHRNA3 with VCP/p97, this interaction also inhibits CHRNA3 ubiquitination by STUB1/CHIP and subsequently ERAD. Interacts with UBXN2A (via SEP domain), the interaction is required for the interaction of CHRNA3 in the STUB1:VCP:UBXN2A complex. Interacts with RIC3; which is required for proper folding and assembly. Interacts with LYPD6. Post-translationally, ubiquitinated; by STUB1/CHIP and thereafter degraded by the 26S proteosome complex.

It is found in the synaptic cell membrane. It localises to the cell membrane. The protein localises to the endoplasmic reticulum. The protein resides in the golgi apparatus. It carries out the reaction K(+)(in) = K(+)(out). The enzyme catalyses Na(+)(in) = Na(+)(out). The catalysed reaction is Ca(2+)(in) = Ca(2+)(out). Activated by a myriad of ligands such as acetylcholine, cytisine, nicotine, choline and epibatidine. The heteropentamer CHRNA3:CHRNB2 activity is blocked by alpha-conotoxins ImI, ImII, PnIA, GID and MII. The heteropentamer CHRNA3:CHRNB4 activity is blocked by the alpha-conotoxin ImI and AuIB. Functionally, component of neuronal acetylcholine receptors (nAChRs) that function as pentameric, ligand-gated cation channels with high calcium permeability among other activities. nAChRs are excitatory neurotrasnmitter receptors formed by a collection of nAChR subunits known to mediate synaptic transmission in the nervous system and the neuromuscular junction. Each nAchR subunit confers differential attributes to channel properties, including activation, deactivation and desensitization kinetics, pH sensitivity, cation permeability, and binding to allosteric modulators. CHRNA3 forms heteropentameric neuronal acetylcholine receptors with CHRNB2 and CHRNB4. CHRNA3:CHRNB4 being predominant in neurons of the autonomic ganglia, it is known as ganglionic nicotinic receptor. CHRNA3:CHRNB4 also plays an important role in the habenulo-interpeduncular tract, modulating the mesolimbic dopamine system and affecting reward circuits and addiction. Hypothalamic CHRNA3:CHRNB4 nAChR activation by nicotine leads to activation of POMC neurons and a decrease in food intake. Also expressed in the urothelium where it modulates reflex bladder activity by increasing intracellular calcium through extracellular influx and basal ATP release. The polypeptide is Neuronal acetylcholine receptor subunit alpha-3 (CHRNA3) (Bos taurus (Bovine)).